The chain runs to 132 residues: D-ribose pyranase (132 aa).

Residue His20 is the Proton donor of the active site. Substrate contacts are provided by residues Asp28, His99, and 121–123 (YAN).

Belongs to the RbsD / FucU family. RbsD subfamily. In terms of assembly, homodecamer.

The protein localises to the cytoplasm. It catalyses the reaction beta-D-ribopyranose = beta-D-ribofuranose. Its pathway is carbohydrate metabolism; D-ribose degradation; D-ribose 5-phosphate from beta-D-ribopyranose: step 1/2. In terms of biological role, catalyzes the interconversion of beta-pyran and beta-furan forms of D-ribose. The sequence is that of D-ribose pyranase from Variovorax paradoxus (strain S110).